Reading from the N-terminus, the 82-residue chain is Bowman-Birk type proteinase inhibitor (82 aa).

The tract at residues S1–C24 is disordered. 7 disulfide bridges follow: C18-C72, C19-C34, C22-C68, C24-C32, C42-C49, C46-C61, and C51-C59.

The protein belongs to the Bowman-Birk serine protease inhibitor family.

Functionally, trypsin and chymotrypsin are inhibited simultaneously. There are two separate reactive sites for trypsin and chymotrypsin but they do not inhibit simultaneously. This is Bowman-Birk type proteinase inhibitor from Phaseolus angularis (Azuki bean).